A 74-amino-acid polypeptide reads, in one-letter code: M-myrmeciitoxin-Mb1a (74 aa).

The first 26 residues, 1–26 (MKLSCLLLTLAIIVVLTIVHAPNVEA), serve as a signal peptide directing secretion. Positions 27 to 50 (KALADPESDAVGFADAVGEADPNA) are excised as a propeptide. The residue at position 73 (Gln-73) is a Glutamine amide.

This sequence belongs to the formicidae venom precursor-01 superfamily. Ant pilosulin family. As to expression, expressed by the venom gland.

The protein localises to the secreted. In terms of biological role, shows moderate activity against E.coli and S.aureus (MIC&lt;25 uM), slight activity against B.subtilis (MIC&lt;50 uM), and no activity against L.garvieae, P.aeruginosa, C.albicans, and S.cerevisiae. Has no hemolytic nor cytolytic activity. Causes an IgE-independent histamine release. In Myrmecia banksi (Jack jumper ant), this protein is M-myrmeciitoxin-Mb1a.